Reading from the N-terminus, the 226-residue chain is Histidine biosynthesis bifunctional protein HisIE (226 aa).

Residues 1–131 (MMPMNQEFIQ…STFNRPLSNT (131 aa)) form a phosphoribosyl-AMP cyclohydrolase region. The tract at residues 132-226 (CSELFEVIKD…KRRQSKSNPK (95 aa)) is phosphoribosyl-ATP pyrophosphohydrolase.

The protein in the N-terminal section; belongs to the PRA-CH family. In the C-terminal section; belongs to the PRA-PH family.

It is found in the cytoplasm. It carries out the reaction 1-(5-phospho-beta-D-ribosyl)-ATP + H2O = 1-(5-phospho-beta-D-ribosyl)-5'-AMP + diphosphate + H(+). It catalyses the reaction 1-(5-phospho-beta-D-ribosyl)-5'-AMP + H2O = 1-(5-phospho-beta-D-ribosyl)-5-[(5-phospho-beta-D-ribosylamino)methylideneamino]imidazole-4-carboxamide. It participates in amino-acid biosynthesis; L-histidine biosynthesis; L-histidine from 5-phospho-alpha-D-ribose 1-diphosphate: step 2/9. The protein operates within amino-acid biosynthesis; L-histidine biosynthesis; L-histidine from 5-phospho-alpha-D-ribose 1-diphosphate: step 3/9. In Prochlorococcus marinus (strain SARG / CCMP1375 / SS120), this protein is Histidine biosynthesis bifunctional protein HisIE.